Consider the following 1027-residue polypeptide: Presequence protease, mitochondrial (1027 aa).

The transit peptide at 1-22 directs the protein to the mitochondrion; sequence MIRQCWAGLRLCRALYQTSYRW. His98 serves as a coordination point for Zn(2+). Residue Glu101 is the Proton acceptor of the active site. The Zn(2+) site is built by His102 and Glu199. Residues Cys113 and Cys550 are joined by a disulfide bond. The disordered stretch occupies residues 803–827; sequence RKAIRPHVVEKSSNPSPSGSEISRT. Over residues 814–825 the composition is skewed to low complexity; that stretch reads SSNPSPSGSEIS.

This sequence belongs to the peptidase M16 family. PreP subfamily. As to quaternary structure, monomer and homodimer; homodimerization is induced by binding of the substrate. Requires Zn(2+) as cofactor. A disulfide bond locks the enzyme in the closed conformation preventing substrate entry into the catalytic chamber.

It is found in the mitochondrion matrix. Its activity is regulated as follows. Mainly exists in a closed and catalytically competent conformation but a closed-to-open switch allows substrate entry into the catalytic chamber. Substrate binding induces closure and dimerization. A disulfide bond may lock the enzyme in a closed conformation preventing substrate entry into the catalytic chamber, participating in redox regulation of the enzyme. Inhibited by metal-chelating agents. Inhibited by nickel and zinc excess, and slightly activated by manganese. Functionally, metalloendopeptidase of the mitochondrial matrix that functions in peptide cleavage and degradation rather than in protein processing. Has an ATP-independent activity. Specifically cleaves peptides in the range of 5 to 65 residues. Shows a preference for cleavage after small polar residues and before basic residues, but without any positional preference. Degrades the transit peptides of mitochondrial proteins after their cleavage. Also degrades other unstructured peptides. This is Presequence protease, mitochondrial (pitrm1) from Xenopus laevis (African clawed frog).